The sequence spans 419 residues: Pyrophosphate--fructose 6-phosphate 1-phosphotransferase (419 aa).

Diphosphate is bound at residue glycine 13. Residues 142-144, 190-192, glutamate 247, and 297-300 contribute to the substrate site; these read TVD, MGR, and YLQR. The active-site Proton acceptor is the aspartate 144.

Belongs to the phosphofructokinase type A (PFKA) family. PPi-dependent PFK group II subfamily. Clade 'B2' sub-subfamily. In terms of assembly, homodimer. Mg(2+) serves as cofactor.

Its subcellular location is the cytoplasm. It catalyses the reaction beta-D-fructose 6-phosphate + diphosphate = beta-D-fructose 1,6-bisphosphate + phosphate + H(+). It functions in the pathway carbohydrate degradation; glycolysis; D-glyceraldehyde 3-phosphate and glycerone phosphate from D-glucose: step 3/4. With respect to regulation, non-allosteric. Functionally, catalyzes the phosphorylation of D-fructose 6-phosphate, the first committing step of glycolysis. Uses inorganic phosphate (PPi) as phosphoryl donor instead of ATP like common ATP-dependent phosphofructokinases (ATP-PFKs), which renders the reaction reversible, and can thus function both in glycolysis and gluconeogenesis. Consistently, PPi-PFK can replace the enzymes of both the forward (ATP-PFK) and reverse (fructose-bisphosphatase (FBPase)) reactions. The polypeptide is Pyrophosphate--fructose 6-phosphate 1-phosphotransferase (Halomonas elongata (strain ATCC 33173 / DSM 2581 / NBRC 15536 / NCIMB 2198 / 1H9)).